Here is a 344-residue protein sequence, read N- to C-terminus: Outer membrane protein assembly factor BamC (344 aa).

The N-terminal stretch at 1–24 (MAYSVQKSRLAKVAGVSLVLLLAA) is a signal peptide. Residue Cys-25 is the site of N-palmitoyl cysteine attachment. A lipid anchor (S-diacylglycerol cysteine) is attached at Cys-25.

The protein belongs to the BamC family. In terms of assembly, part of the Bam complex, which is composed of the outer membrane protein BamA, and four lipoproteins BamB, BamC, BamD and BamE. Forms a subcomplex with BamD and BamE. The Bam complex has the shape of a hat, with the BamA beta-barrel crown in the outer membrane and the periplasmic brim formed by the BamA POTRA domains and the 4 lipoproteins.

The protein localises to the cell outer membrane. In terms of biological role, part of the outer membrane protein assembly complex (Bam), which is involved in assembly and insertion of beta-barrel proteins into the outer membrane. Nonessential member of the complex that stabilizes the interaction between the essential proteins BamA and BamD. Efficient substrate folding and insertion into the outer membrane requires all 5 subunits. A lateral gate may open between the first and last strands of the BamA beta-barrel that allows substrate to insert into the outer membrane; comparison of the structures of complete and nearly complete Bam complexes show there is considerable movement of all 5 proteins. The sequence is that of Outer membrane protein assembly factor BamC from Escherichia coli (strain K12).